Here is a 294-residue protein sequence, read N- to C-terminus: Phosphate import ATP-binding protein PstB (294 aa).

Positions 1-18 (MSETMTNQNVVNEEQPFN) are enriched in polar residues. The disordered stretch occupies residues 1 to 24 (MSETMTNQNVVNEEQPFNESKHRS). One can recognise an ABC transporter domain in the interval 48 to 289 (LEVNKLKLFY…PSCKQTEDYI (242 aa)). 80–87 (GPSGCGKS) contacts ATP.

The protein belongs to the ABC transporter superfamily. Phosphate importer (TC 3.A.1.7) family. As to quaternary structure, the complex is composed of two ATP-binding proteins (PstB), two transmembrane proteins (PstC and PstA) and a solute-binding protein (PstS).

Its subcellular location is the cell inner membrane. It carries out the reaction phosphate(out) + ATP + H2O = ADP + 2 phosphate(in) + H(+). Functionally, part of the ABC transporter complex PstSACB involved in phosphate import. Responsible for energy coupling to the transport system. The polypeptide is Phosphate import ATP-binding protein PstB (Hahella chejuensis (strain KCTC 2396)).